The chain runs to 292 residues: NAD kinase (292 aa).

Asp73 acts as the Proton acceptor in catalysis. Residues 73-74, 147-148, His158, Arg175, Asp177, 188-193, and Gln247 contribute to the NAD(+) site; these read DG, NE, and TAYSLS.

Belongs to the NAD kinase family. The cofactor is a divalent metal cation.

It is found in the cytoplasm. The enzyme catalyses NAD(+) + ATP = ADP + NADP(+) + H(+). Involved in the regulation of the intracellular balance of NAD and NADP, and is a key enzyme in the biosynthesis of NADP. Catalyzes specifically the phosphorylation on 2'-hydroxyl of the adenosine moiety of NAD to yield NADP. The polypeptide is NAD kinase (Erwinia tasmaniensis (strain DSM 17950 / CFBP 7177 / CIP 109463 / NCPPB 4357 / Et1/99)).